We begin with the raw amino-acid sequence, 445 residues long: Lipid A 1-phosphatase (445 aa).

The first 22 residues, 1-22 (MNRESFLLLLVLLFALPLHLQA), serve as a signal peptide directing secretion.

It localises to the periplasm. The protein operates within bacterial outer membrane biogenesis; LPS lipid A biosynthesis. Functionally, removes the 1-phosphate group from lipid A species. Absence of phosphate groups in lipid A renders the bacteria resistant to host-derived cationic antimicrobial peptides (CAMP) and allowing it to camouflage itself from the host innate immune response. This chain is Lipid A 1-phosphatase, found in Porphyromonas gingivalis (strain ATCC 33277 / DSM 20709 / CIP 103683 / JCM 12257 / NCTC 11834 / 2561).